The chain runs to 671 residues: Nucleolar GTP-binding protein 1 (671 aa).

An OBG-type G domain is found at 169-350; the sequence is RTVLICGYPN…VKNAACERLL (182 aa). Residues 175-182, 221-225, and 289-292 each bind GTP; these read GYPNVGKS, DTPGI, and NKTD. The segment at 516 to 671 is disordered; that stretch reads VAQNRSTVPR…KRGKGKTDRR (156 aa). Positions 595-605 are enriched in polar residues; the sequence is RAMSISRSQSR. Composition is skewed to basic residues over residues 631–640 and 654–671; these read NKSHKKRDKN and RPKHLFSGKRGKGKTDRR.

The protein belongs to the TRAFAC class OBG-HflX-like GTPase superfamily. OBG GTPase family. NOG subfamily.

The protein localises to the nucleus. It localises to the nucleolus. Functionally, involved in the biogenesis of the 60S ribosomal subunit. In Arabidopsis thaliana (Mouse-ear cress), this protein is Nucleolar GTP-binding protein 1.